A 536-amino-acid polypeptide reads, in one-letter code: Arylsulfatase (536 aa).

Positions 13, 14, and 51 each coordinate Ca(2+). The active-site Nucleophile is the C51. Residue C51 is modified to 3-oxoalanine (Cys). H115 is a catalytic residue. Ca(2+)-binding residues include D317 and N318.

The protein belongs to the sulfatase family. As to quaternary structure, monomer. Ca(2+) serves as cofactor. The conversion to 3-oxoalanine (also known as C-formylglycine, FGly), of a serine or cysteine residue in prokaryotes and of a cysteine residue in eukaryotes, is critical for catalytic activity.

It localises to the cytoplasm. It catalyses the reaction an aryl sulfate + H2O = a phenol + sulfate + H(+). Functionally, hydrolyzes the bond between sulfate and the aromatic ring in a compound such as 4-nitrocatechol sulfate. The protein is Arylsulfatase (atsA) of Pseudomonas aeruginosa (strain ATCC 15692 / DSM 22644 / CIP 104116 / JCM 14847 / LMG 12228 / 1C / PRS 101 / PAO1).